Here is a 375-residue protein sequence, read N- to C-terminus: Histidine biosynthesis bifunctional protein HisB (375 aa).

The interval 1–168 (MTPILFVDRD…GIAHELADAP (168 aa)) is histidinol-phosphatase. Asp-8 serves as the catalytic Nucleophile. Asp-8, Asp-10, and Asp-128 together coordinate Mg(2+). The active-site Proton donor is Asp-10. Residues 169–375 (RRAVVQRNTK…TALPSTKGAL (207 aa)) form an imidazoleglycerol-phosphate dehydratase region.

The protein in the N-terminal section; belongs to the histidinol-phosphatase family. It in the C-terminal section; belongs to the imidazoleglycerol-phosphate dehydratase family. Mg(2+) serves as cofactor.

The protein localises to the cytoplasm. It catalyses the reaction D-erythro-1-(imidazol-4-yl)glycerol 3-phosphate = 3-(imidazol-4-yl)-2-oxopropyl phosphate + H2O. It carries out the reaction L-histidinol phosphate + H2O = L-histidinol + phosphate. It functions in the pathway amino-acid biosynthesis; L-histidine biosynthesis; L-histidine from 5-phospho-alpha-D-ribose 1-diphosphate: step 6/9. The protein operates within amino-acid biosynthesis; L-histidine biosynthesis; L-histidine from 5-phospho-alpha-D-ribose 1-diphosphate: step 8/9. The sequence is that of Histidine biosynthesis bifunctional protein HisB from Xanthomonas campestris pv. campestris (strain 8004).